We begin with the raw amino-acid sequence, 217 residues long: MSENSLTITEILSSIRTLLVKHNKAKVTQIEKELLQAVAELEKKFKQQVQNFNELQQKIPNLQKVNEEFRLKVEKIQEEAQKKIQEKVAELTIKSKEELENAKKYVIEKSIDQPLIIIDQFEIALSYAQKDPQVKNYTTGFNMVLDAFSRWLEGFGVTKIAIEPGAQFDEKVMAALEVVPSDQPANTVVKVSKSGYKLHDKVIRFASVVVSQGNKTE.

The protein belongs to the GrpE family. Homodimer.

Its subcellular location is the cytoplasm. Participates actively in the response to hyperosmotic and heat shock by preventing the aggregation of stress-denatured proteins, in association with DnaK and GrpE. It is the nucleotide exchange factor for DnaK and may function as a thermosensor. Unfolded proteins bind initially to DnaJ; upon interaction with the DnaJ-bound protein, DnaK hydrolyzes its bound ATP, resulting in the formation of a stable complex. GrpE releases ADP from DnaK; ATP binding to DnaK triggers the release of the substrate protein, thus completing the reaction cycle. Several rounds of ATP-dependent interactions between DnaJ, DnaK and GrpE are required for fully efficient folding. This chain is Protein GrpE, found in Mycoplasma pneumoniae (strain ATCC 29342 / M129 / Subtype 1) (Mycoplasmoides pneumoniae).